The sequence spans 294 residues: Cell division protein ZipA (294 aa).

Residue Met1 is a topological domain, periplasmic. The chain crosses the membrane as a helical span at residues 2–22 (EIGLREWLILIGIIVIAGILF). Residues 23 to 294 (DGWRRMRGGK…FERRALTQKR (272 aa)) are Cytoplasmic-facing. Disordered stretches follow at residues 64-111 (THKE…GDLN) and 126-146 (KDDFVADNNRHGAAATPSTPV). A compositionally biased stretch (basic and acidic residues) spans 82–91 (ARERERDPKP).

Belongs to the ZipA family. In terms of assembly, interacts with FtsZ via their C-terminal domains.

It is found in the cell inner membrane. Its function is as follows. Essential cell division protein that stabilizes the FtsZ protofilaments by cross-linking them and that serves as a cytoplasmic membrane anchor for the Z ring. Also required for the recruitment to the septal ring of downstream cell division proteins. In Pseudomonas entomophila (strain L48), this protein is Cell division protein ZipA.